The following is a 986-amino-acid chain: MVTTVISNVKRQSRASLVGKRNAGHRSAMSKLADRLAPCGPVLDPKAAERAYEAIAKRAGEAMGQVDAAWGSLAPVFAASPYLAGLARRDGKRLPRILGGDPGETLAAILAAAEAVAAEPDFETARRVLRELKADLHLLTAISDLGGVWDLDQVTGALTRFADAVLHAALAQAVRQEVSRGALTHVGDGSAGPAPGLFCVAMGKHGAFELNYSSDIDFSIFYAPEKLPVAEGHEPQAVAVRIANHLGRILQERTGDGYVFRIDLRLRPDPSSTPPAMPVDAAMDYYESVGQNWERAAHIKARIAAGDAAEGAAFLEGLQPFIWRRNLDFAAIADIHSIKRQIHTYKVDDRLTAKGADLKLGRGGIREIEFFVQTQQLILGGRQPDLRSPRTLDALQALAAAGHVTPEDAAWLTQAYKDLRALEHRAQMIADDQTHKLPESDVERKKVAALWGEGNLRVFDAAVGKMLKGVNLRYGRLFAGEEALSSRFGSLVFTGVEDDPETLATLKRMGFSSPERVAATIRGWHHGHIAATRTERGRELFTRLAPRLLDAANATGAPDQAFNRFSDFFSRLSSGVQIQSLFLAQPRLFELIVEVMAFAPRLAATMAKRPTALDALLDPTFFGPIETPAIAPWDPEDFEGAMDAARRLFRDQSFRIGVRVMSGTADARDIGRAFAELADLIIGGLAPAALAEVERIGGAFPGQVAVVALGKAGSREMTAKSDLDLMTLYVADDPRSMSALKDWSAEVFYARLTQRLTSALSAPTGEGTLYEVDLKLRPSGTKGPVAVSFAAFEHYYEREAETWELLALTRARVVWASSPDFKARAEGAIAAALRRPRAWKKTAADVIEMRQLMERERPGKGDWDLKLDPGGLVDIEFAAQFLQLAHAAADGPLRQNTGEALAALREAGLADAGALSRLEAAWRLEQDLSQLIKVALEDGADVEVEPKAFKALLAKAGGVTQFKSLKPKLAKAKAEARAAYEAVVKG.

The tract at residues 1 to 482 (MVTTVISNVK…RYGRLFAGEE (482 aa)) is adenylyl removase. Residues 486–986 (SRFGSLVFTG…RAAYEAVVKG (501 aa)) are adenylyl transferase.

The protein belongs to the GlnE family. Mg(2+) is required as a cofactor.

It carries out the reaction [glutamine synthetase]-O(4)-(5'-adenylyl)-L-tyrosine + phosphate = [glutamine synthetase]-L-tyrosine + ADP. It catalyses the reaction [glutamine synthetase]-L-tyrosine + ATP = [glutamine synthetase]-O(4)-(5'-adenylyl)-L-tyrosine + diphosphate. In terms of biological role, involved in the regulation of glutamine synthetase GlnA, a key enzyme in the process to assimilate ammonia. When cellular nitrogen levels are high, the C-terminal adenylyl transferase (AT) inactivates GlnA by covalent transfer of an adenylyl group from ATP to specific tyrosine residue of GlnA, thus reducing its activity. Conversely, when nitrogen levels are low, the N-terminal adenylyl removase (AR) activates GlnA by removing the adenylyl group by phosphorolysis, increasing its activity. The regulatory region of GlnE binds the signal transduction protein PII (GlnB) which indicates the nitrogen status of the cell. This is Bifunctional glutamine synthetase adenylyltransferase/adenylyl-removing enzyme from Caulobacter vibrioides (strain ATCC 19089 / CIP 103742 / CB 15) (Caulobacter crescentus).